Here is a 360-residue protein sequence, read N- to C-terminus: Chorismate synthase (360 aa).

Arg47 is a binding site for NADP(+). FMN contacts are provided by residues 124–126 (RAS), Gly286, 301–305 (KPTAT), and Arg327.

The protein belongs to the chorismate synthase family. Homotetramer. FMNH2 is required as a cofactor.

It carries out the reaction 5-O-(1-carboxyvinyl)-3-phosphoshikimate = chorismate + phosphate. It participates in metabolic intermediate biosynthesis; chorismate biosynthesis; chorismate from D-erythrose 4-phosphate and phosphoenolpyruvate: step 7/7. In terms of biological role, catalyzes the anti-1,4-elimination of the C-3 phosphate and the C-6 proR hydrogen from 5-enolpyruvylshikimate-3-phosphate (EPSP) to yield chorismate, which is the branch point compound that serves as the starting substrate for the three terminal pathways of aromatic amino acid biosynthesis. This reaction introduces a second double bond into the aromatic ring system. The sequence is that of Chorismate synthase from Synechococcus sp. (strain RCC307).